Here is a 259-residue protein sequence, read N- to C-terminus: Ras-related protein Rab-34 (259 aa).

At Met1 the chain carries N-acetylmethionine. The GTP site is built by Ser62, Val63, Gly64, Lys65, Thr66, Asp78, Tyr81, and Thr84. Thr66 serves as a coordination point for Mg(2+). The Switch 1 signature appears at 71–89 (RFCKDTFDKNYKATIGVDF). Mg(2+) is bound by residues Thr84 and Asp107. The Switch 2 signature appears at 108–127 (TAGQERFKCIASTYYRGAQA). GTP is bound by residues Gly110, Lys167, Asp169, and Ser198. Ser241 bears the Phosphoserine mark. 2 S-geranylgeranyl cysteine lipidation sites follow: Cys257 and Cys258.

Belongs to the small GTPase superfamily. Rab family. In terms of assembly, interacts with RILP. The GTP-bound form interacts with REP15. Mg(2+) serves as cofactor.

The protein localises to the cytoplasm. It localises to the golgi apparatus. It is found in the cytoplasmic vesicle. The protein resides in the phagosome. Its subcellular location is the phagosome membrane. The protein localises to the cell projection. It localises to the cilium. It is found in the cytoskeleton. The protein resides in the microtubule organizing center. Its subcellular location is the centrosome. The protein localises to the centriole. It catalyses the reaction GTP + H2O = GDP + phosphate + H(+). With respect to regulation, regulated by guanine nucleotide exchange factors (GEFs) which promote the exchange of bound GDP for free GTP. Regulated by GTPase activating proteins (GAPs) which increase the GTP hydrolysis activity. Inhibited by GDP dissociation inhibitors (GDIs). Its function is as follows. The small GTPases Rab are key regulators of intracellular membrane trafficking, from the formation of transport vesicles to their fusion with membranes. Rabs cycle between an inactive GDP-bound form and an active GTP-bound form that is able to recruit to membranes different sets of downstream effectors directly responsible for vesicle formation, movement, tethering and fusion. RAB34 transports protein involved in the redistribution of lysosomes to the peri-Golgi region. Plays a role in the maturation of phagosomes that engulf pathogens, such as S.aureus and M.tuberculosis. Plays a role in the fusion of phagosomes with lysosomes. Involved in ciliogenesis. In particular, it is required for early steps of the intracellular cilium assembly pathway initiated by trafficking and docking of ciliary vesicles to the centrioles in the cytoplasm, followed by axoneme formation in the cytoplasm. After axoneme elongation, the centrioles migrate close to the cell surface so that ciliary vesicles can fuse with the plasma membrane to expose cilia to the extracellular space. It seems dispensable for ciliogenesis via the extracellular pathway where cilium assembly begins after migration and docking of the centriole to the plasma membrane. Also acts as a positive regulator of hedgehog signaling and regulates ciliary function. The chain is Ras-related protein Rab-34 from Rattus norvegicus (Rat).